The chain runs to 435 residues: MPTEQMPIFALATGAGRAAIAVMRLTGAGCGDMLQRLCGPLPPPRQASLRGLWRRDAAAAPVLLDRALVLWFPGPRSYTGEDSAELHLHAGPAVIAGVADALVALGARPAEPGEFTRRAFAHGRLDLIEAEGIADLIDAETEAQRRQALDQADGTLSRIYDGWAARLRTLLAHQEALIDFPDEDLPPGVEQALLDDLTALRSEMQAHLDDGGRGEKLRRGLVFTIVGAPNVGKSSLLNALAGRDAAIVSAIAGTTRDAIEIRVVLGDVPVTLIDTAGLRETQDEIEAEGVRRALFHVKHADCVIAMFDGETVPDDIPADAIRVRNKVDLAPVPAGADAIGISVRQGTGMDALRTALAERARALTASAAGPPLTRARHRAAIEETAGHLAAALDMHWPEMRGEEMRLAMRALGRLTGAVGVEDLLDTVFGQFCIGK.

Arg-24, Glu-85, and Arg-124 together coordinate (6S)-5-formyl-5,6,7,8-tetrahydrofolate. Residues 220–361 (GLVFTIVGAP…LRTALAERAR (142 aa)) form the TrmE-type G domain. Asn-230 contacts K(+). Residues 230-235 (NVGKSS), 249-255 (SAIAGTT), and 274-277 (DTAG) contribute to the GTP site. Ser-234 serves as a coordination point for Mg(2+). K(+)-binding residues include Ser-249, Ile-251, and Thr-254. Thr-255 contacts Mg(2+). Position 435 (Lys-435) interacts with (6S)-5-formyl-5,6,7,8-tetrahydrofolate.

This sequence belongs to the TRAFAC class TrmE-Era-EngA-EngB-Septin-like GTPase superfamily. TrmE GTPase family. As to quaternary structure, homodimer. Heterotetramer of two MnmE and two MnmG subunits. It depends on K(+) as a cofactor.

Its subcellular location is the cytoplasm. Functionally, exhibits a very high intrinsic GTPase hydrolysis rate. Involved in the addition of a carboxymethylaminomethyl (cmnm) group at the wobble position (U34) of certain tRNAs, forming tRNA-cmnm(5)s(2)U34. This is tRNA modification GTPase MnmE from Gluconacetobacter diazotrophicus (strain ATCC 49037 / DSM 5601 / CCUG 37298 / CIP 103539 / LMG 7603 / PAl5).